The following is a 342-amino-acid chain: Phosphate acyltransferase (342 aa).

This sequence belongs to the PlsX family. As to quaternary structure, homodimer. Probably interacts with PlsY.

It is found in the cytoplasm. It catalyses the reaction a fatty acyl-[ACP] + phosphate = an acyl phosphate + holo-[ACP]. The protein operates within lipid metabolism; phospholipid metabolism. Functionally, catalyzes the reversible formation of acyl-phosphate (acyl-PO(4)) from acyl-[acyl-carrier-protein] (acyl-ACP). This enzyme utilizes acyl-ACP as fatty acyl donor, but not acyl-CoA. The protein is Phosphate acyltransferase of Shewanella loihica (strain ATCC BAA-1088 / PV-4).